Reading from the N-terminus, the 205-residue chain is Large ribosomal subunit protein uL4 (205 aa).

The interval 56-78 is disordered; that stretch reads VSGTTAKPYRQKHTGRARQGSLR.

It belongs to the universal ribosomal protein uL4 family. As to quaternary structure, part of the 50S ribosomal subunit.

In terms of biological role, one of the primary rRNA binding proteins, this protein initially binds near the 5'-end of the 23S rRNA. It is important during the early stages of 50S assembly. It makes multiple contacts with different domains of the 23S rRNA in the assembled 50S subunit and ribosome. Forms part of the polypeptide exit tunnel. In Ehrlichia ruminantium (strain Gardel), this protein is Large ribosomal subunit protein uL4.